Consider the following 229-residue polypeptide: 2,3-bisphosphoglycerate-dependent phosphoglycerate mutase (229 aa).

Substrate contacts are provided by residues 7 to 14 (RHGQSEWN), 20 to 21 (TG), Arg-59, 86 to 89 (ERHY), Lys-97, 113 to 114 (RR), and 182 to 183 (GN). His-8 acts as the Tele-phosphohistidine intermediate in catalysis. Glu-86 (proton donor/acceptor) is an active-site residue.

It belongs to the phosphoglycerate mutase family. BPG-dependent PGAM subfamily.

The enzyme catalyses (2R)-2-phosphoglycerate = (2R)-3-phosphoglycerate. The protein operates within carbohydrate degradation; glycolysis; pyruvate from D-glyceraldehyde 3-phosphate: step 3/5. Functionally, catalyzes the interconversion of 2-phosphoglycerate and 3-phosphoglycerate. The sequence is that of 2,3-bisphosphoglycerate-dependent phosphoglycerate mutase from Listeria monocytogenes serotype 4b (strain F2365).